Reading from the N-terminus, the 20-residue chain is AFELPALPYAKDALEPHISA.

The protein belongs to the iron/manganese superoxide dismutase family. In terms of assembly, homodimer. It depends on Fe cation as a cofactor.

The protein resides in the periplasm. The enzyme catalyses 2 superoxide + 2 H(+) = H2O2 + O2. Destroys superoxide anion radicals which are normally produced within the cells and which are toxic to biological systems. The protein is Superoxide dismutase [Fe] (sodB) of Photobacterium damsela subsp. piscicida (Pasteurella piscicida).